Consider the following 340-residue polypeptide: 4-hydroxythreonine-4-phosphate dehydrogenase (340 aa).

T135 provides a ligand contact to substrate. H170, H215, and H276 together coordinate a divalent metal cation. K284, N293, and R302 together coordinate substrate.

It belongs to the PdxA family. Homodimer. It depends on a divalent metal cation as a cofactor.

The protein localises to the cytoplasm. It catalyses the reaction 4-(phosphooxy)-L-threonine + NAD(+) = 3-amino-2-oxopropyl phosphate + CO2 + NADH. Its pathway is cofactor biosynthesis; pyridoxine 5'-phosphate biosynthesis; pyridoxine 5'-phosphate from D-erythrose 4-phosphate: step 4/5. Catalyzes the NAD(P)-dependent oxidation of 4-(phosphooxy)-L-threonine (HTP) into 2-amino-3-oxo-4-(phosphooxy)butyric acid which spontaneously decarboxylates to form 3-amino-2-oxopropyl phosphate (AHAP). The sequence is that of 4-hydroxythreonine-4-phosphate dehydrogenase from Synechococcus sp. (strain JA-2-3B'a(2-13)) (Cyanobacteria bacterium Yellowstone B-Prime).